The following is a 204-amino-acid chain: Large ribosomal subunit protein eL15 (204 aa).

Belongs to the eukaryotic ribosomal protein eL15 family. Component of the large ribosomal subunit.

It localises to the cytoplasm. In terms of biological role, component of the large ribosomal subunit. The ribosome is a large ribonucleoprotein complex responsible for the synthesis of proteins in the cell. In Monopterus albus (Swamp eel), this protein is Large ribosomal subunit protein eL15 (rpl15).